Consider the following 1332-residue polypeptide: Delta-poly-L-ornithine synthetase (1332 aa).

Positions 217, 221, and 304 each coordinate L-ornithine. Residues E221, T304, G306, and T308 each contribute to the D-ornithine site. Positions 312 and 313 each coordinate L-ornithine. A D-ornithine-binding site is contributed by S313. The region spanning 524 to 601 (QPQNPAEEIL…AIAALMLEQP (78 aa)) is the Carrier domain. S560 bears the O-(pantetheine 4'-phosphoryl)serine mark. 6 helical membrane passes run 629–649 (LVTI…PFFT), 664–684 (AIAL…VLSI), 868–888 (VSAL…FLLV), 908–928 (LYYF…TAVI), 1120–1140 (IVLP…DVID), and 1151–1171 (LVAL…IVAL).

This sequence belongs to the ATP-dependent AMP-binding enzyme family. Pantetheine 4'-phosphate serves as cofactor.

Its subcellular location is the cell membrane. The enzyme catalyses n L-ornithine + n ATP + H2O = N(5)-(L-ornithyl)-[N(5)-(L-ornithyl)]n-1 + n AMP + n diphosphate + n H(+). It carries out the reaction n D-ornithine + n ATP + H2O = N(5)-(D-ornithyl)-[N(5)-(D-ornithyl)]n-1 + n AMP + n diphosphate + n H(+). Functionally, catalyzes the polymerization of L-ornithine, generating poly-L-ornithine composed of 7-12 amino acid units joined via isopeptide bonds between the carboxylate and the side chain amine. This polymer exhibits potent antifungal activity and thus may have a potential role in survival benefit for A.baumannii. The reaction occurs via ATP-dependent adenylation of the substrate. Can also adenylate D-ornithine with similar efficiency and thus may produce D-ornithine polymers. This chain is Delta-poly-L-ornithine synthetase, found in Acinetobacter baumannii (strain AB307-0294).